Here is a 106-residue protein sequence, read N- to C-terminus: MISLPVVIISIVLFFVLFFGIGFLLNMLLRMSWIMAVIYPIVCLFIISKEKLISYVQSPGESFASLFHRVLSLAAADVLILVSGLAGAIVSGIAINMLRKRGYQMF.

The next 3 membrane-spanning stretches (helical) occupy residues 4-24 (LPVVIISIVLFFVLFFGIGFL), 27-47 (MLLRMSWIMAVIYPIVCLFII), and 78-98 (VLILVSGLAGAIVSGIAINML).

It is found in the cell membrane. This is an uncharacterized protein from Bacillus subtilis (strain 168).